The chain runs to 611 residues: Dihydroxy-acid dehydratase (611 aa).

Asp-81 serves as a coordination point for Mg(2+). Position 122 (Cys-122) interacts with [2Fe-2S] cluster. Asp-123 and Lys-124 together coordinate Mg(2+). Lys-124 is modified (N6-carboxylysine). A [2Fe-2S] cluster-binding site is contributed by Cys-195. Residue Glu-491 coordinates Mg(2+). Ser-517 acts as the Proton acceptor in catalysis.

Belongs to the IlvD/Edd family. As to quaternary structure, homodimer. The cofactor is [2Fe-2S] cluster. Requires Mg(2+) as cofactor.

The catalysed reaction is (2R)-2,3-dihydroxy-3-methylbutanoate = 3-methyl-2-oxobutanoate + H2O. It carries out the reaction (2R,3R)-2,3-dihydroxy-3-methylpentanoate = (S)-3-methyl-2-oxopentanoate + H2O. It functions in the pathway amino-acid biosynthesis; L-isoleucine biosynthesis; L-isoleucine from 2-oxobutanoate: step 3/4. Its pathway is amino-acid biosynthesis; L-valine biosynthesis; L-valine from pyruvate: step 3/4. Its function is as follows. Functions in the biosynthesis of branched-chain amino acids. Catalyzes the dehydration of (2R,3R)-2,3-dihydroxy-3-methylpentanoate (2,3-dihydroxy-3-methylvalerate) into 2-oxo-3-methylpentanoate (2-oxo-3-methylvalerate) and of (2R)-2,3-dihydroxy-3-methylbutanoate (2,3-dihydroxyisovalerate) into 2-oxo-3-methylbutanoate (2-oxoisovalerate), the penultimate precursor to L-isoleucine and L-valine, respectively. The sequence is that of Dihydroxy-acid dehydratase from Actinobacillus pleuropneumoniae serotype 3 (strain JL03).